Reading from the N-terminus, the 193-residue chain is Inner membrane-spanning protein YciB (193 aa).

Transmembrane regions (helical) follow at residues 5 to 25 (TLDA…FYIY), 36 to 56 (IIAA…LMFV), 67 to 87 (WLVV…QDDF), 93 to 113 (APII…FLGG), 138 to 158 (VWVG…FVWV), and 164 to 184 (FTAF…FWFL).

This sequence belongs to the YciB family.

Its subcellular location is the cell inner membrane. Plays a role in cell envelope biogenesis, maintenance of cell envelope integrity and membrane homeostasis. This chain is Inner membrane-spanning protein YciB, found in Vitreoscilla sp. (strain C1).